The primary structure comprises 511 residues: Cytochrome P450 26B1 (511 aa).

C440 contacts heme.

This sequence belongs to the cytochrome P450 family. Heme serves as cofactor.

It localises to the endoplasmic reticulum membrane. It is found in the microsome membrane. The enzyme catalyses all-trans-retinoate + reduced [NADPH--hemoprotein reductase] + O2 = all-trans-4-hydroxyretinoate + oxidized [NADPH--hemoprotein reductase] + H2O + H(+). It catalyses the reaction all-trans-retinoate + reduced [NADPH--hemoprotein reductase] + O2 = all-trans-18-hydroxyretinoate + oxidized [NADPH--hemoprotein reductase] + H2O + H(+). Functionally, a cytochrome P450 monooxygenase involved in the metabolism of retinoates (RAs), the active metabolites of vitamin A, and critical signaling molecules in animals. RAs exist as at least four different isomers: all-trans-RA (atRA), 9-cis-RA, 13-cis-RA, and 9,13-dicis-RA, where atRA is considered to be the biologically active isomer, although 9-cis-RA and 13-cis-RA also have activity. Catalyzes the hydroxylation of atRA primarily at C-4 and C-18, thereby contributing to the regulation of atRA homeostasis and signaling. Hydroxylation of atRA limits its biological activity and initiates a degradative process leading to its eventual elimination. Involved in the convertion of atRA to all-trans-4-oxo-RA. Can oxidize all-trans-13,14-dihydroretinoate (DRA) to metabolites which could include all-trans-4-oxo-DRA, all-trans-4-hydroxy-DRA, all-trans-5,8-epoxy-DRA, and all-trans-18-hydroxy-DRA. In Xenopus tropicalis (Western clawed frog), this protein is Cytochrome P450 26B1 (cyp26b1).